A 405-amino-acid polypeptide reads, in one-letter code: Deoxyguanosinetriphosphate triphosphohydrolase-like protein (405 aa).

One can recognise an HD domain in the interval 75 to 219; sequence RLTHTIEVAQ…AAIADDIAYN (145 aa).

This sequence belongs to the dGTPase family. Type 2 subfamily.

This chain is Deoxyguanosinetriphosphate triphosphohydrolase-like protein, found in Rhizobium leguminosarum bv. trifolii (strain WSM2304).